The primary structure comprises 872 residues: Alanine--tRNA ligase (872 aa).

His563, His567, Cys665, and His669 together coordinate Zn(2+).

Belongs to the class-II aminoacyl-tRNA synthetase family. Zn(2+) is required as a cofactor.

It localises to the cytoplasm. The enzyme catalyses tRNA(Ala) + L-alanine + ATP = L-alanyl-tRNA(Ala) + AMP + diphosphate. Catalyzes the attachment of alanine to tRNA(Ala) in a two-step reaction: alanine is first activated by ATP to form Ala-AMP and then transferred to the acceptor end of tRNA(Ala). Also edits incorrectly charged Ser-tRNA(Ala) and Gly-tRNA(Ala) via its editing domain. The polypeptide is Alanine--tRNA ligase (Bacteroides thetaiotaomicron (strain ATCC 29148 / DSM 2079 / JCM 5827 / CCUG 10774 / NCTC 10582 / VPI-5482 / E50)).